The primary structure comprises 501 residues: Cytochrome P450 90A4 (501 aa).

Residues 2 to 22 form a helical membrane-spanning segment; the sequence is AAAALLLLAAAAAAVVVAMAL. C446 lines the heme pocket.

Belongs to the cytochrome P450 family. It depends on heme as a cofactor.

The protein localises to the membrane. The protein operates within plant hormone biosynthesis; brassinosteroid biosynthesis. In terms of biological role, catalyzes the C23-alpha-hydroxylation step in brassinosteroid biosynthesis. Converts 6-deoxocathasterone to 6-deoxoteasterone in the late C6-oxidation pathway and cathasterone to teasterone (TE) in the early C6-oxidation pathway of brassinolide (BL) biosynthesis. This chain is Cytochrome P450 90A4, found in Oryza sativa subsp. indica (Rice).